Consider the following 179-residue polypeptide: Large ribosomal subunit protein uL5 (179 aa).

It belongs to the universal ribosomal protein uL5 family. As to quaternary structure, part of the 50S ribosomal subunit; part of the 5S rRNA/L5/L18/L25 subcomplex. Contacts the 5S rRNA and the P site tRNA. Forms a bridge to the 30S subunit in the 70S ribosome.

Its function is as follows. This is one of the proteins that bind and probably mediate the attachment of the 5S RNA into the large ribosomal subunit, where it forms part of the central protuberance. In the 70S ribosome it contacts protein S13 of the 30S subunit (bridge B1b), connecting the 2 subunits; this bridge is implicated in subunit movement. Contacts the P site tRNA; the 5S rRNA and some of its associated proteins might help stabilize positioning of ribosome-bound tRNAs. This Rickettsia akari (strain Hartford) protein is Large ribosomal subunit protein uL5.